A 158-amino-acid chain; its full sequence is 6,7-dimethyl-8-ribityllumazine synthase (158 aa).

Residues W27, 58–60 (SFE), and 81–83 (VII) each bind 5-amino-6-(D-ribitylamino)uracil. 86–87 (GT) lines the (2S)-2-hydroxy-3-oxobutyl phosphate pocket. The active-site Proton donor is the H89. F114 contacts 5-amino-6-(D-ribitylamino)uracil. Residue R128 coordinates (2S)-2-hydroxy-3-oxobutyl phosphate.

It belongs to the DMRL synthase family.

The catalysed reaction is (2S)-2-hydroxy-3-oxobutyl phosphate + 5-amino-6-(D-ribitylamino)uracil = 6,7-dimethyl-8-(1-D-ribityl)lumazine + phosphate + 2 H2O + H(+). It participates in cofactor biosynthesis; riboflavin biosynthesis; riboflavin from 2-hydroxy-3-oxobutyl phosphate and 5-amino-6-(D-ribitylamino)uracil: step 1/2. Its function is as follows. Catalyzes the formation of 6,7-dimethyl-8-ribityllumazine by condensation of 5-amino-6-(D-ribitylamino)uracil with 3,4-dihydroxy-2-butanone 4-phosphate. This is the penultimate step in the biosynthesis of riboflavin. The sequence is that of 6,7-dimethyl-8-ribityllumazine synthase from Leifsonia xyli subsp. xyli (strain CTCB07).